Consider the following 160-residue polypeptide: Phosphopantetheine adenylyltransferase (160 aa).

It belongs to the eukaryotic CoaD family.

It localises to the cytoplasm. The enzyme catalyses (R)-4'-phosphopantetheine + ATP + H(+) = 3'-dephospho-CoA + diphosphate. Its pathway is cofactor biosynthesis; coenzyme A biosynthesis. Reversibly transfers an adenylyl group from ATP to 4'-phosphopantetheine, yielding dephospho-CoA (dPCoA) and pyrophosphate. The chain is Phosphopantetheine adenylyltransferase from Pyrococcus furiosus (strain ATCC 43587 / DSM 3638 / JCM 8422 / Vc1).